The chain runs to 270 residues: MTLRVAIVGAGGRMGRQLIQAVSETEGVVLGAAFERQGSSLLGADAGELANVGHLGVQITDDLASQQDQFDLLIDFTRPEGTLAHLAFCVAQHKNMVIGTTGFDDDGKAKIQQAADSIGIVFASNFSVGVNLVFKLLEKAAKVMGDYCDIEIIEAHHRHKVDAPSGTALSMGEHIAKTLGRDLKTHGVFTRDGITGERKRDEIGFATIRASDVVGEHSVWFADIGERVEIAHKATSRMTFAKGAVRAAKWLAQKEKGLFDMTDVLDLNQL.

Residues 9–14 (GAGGRM) and glutamate 35 each bind NAD(+). Arginine 36 provides a ligand contact to NADP(+). NAD(+) contacts are provided by residues 99–101 (GTT) and 123–126 (ASNF). Histidine 156 acts as the Proton donor/acceptor in catalysis. A (S)-2,3,4,5-tetrahydrodipicolinate-binding site is contributed by histidine 157. Lysine 160 acts as the Proton donor in catalysis. Residue 166-167 (GT) coordinates (S)-2,3,4,5-tetrahydrodipicolinate.

The protein belongs to the DapB family.

Its subcellular location is the cytoplasm. The catalysed reaction is (S)-2,3,4,5-tetrahydrodipicolinate + NAD(+) + H2O = (2S,4S)-4-hydroxy-2,3,4,5-tetrahydrodipicolinate + NADH + H(+). It catalyses the reaction (S)-2,3,4,5-tetrahydrodipicolinate + NADP(+) + H2O = (2S,4S)-4-hydroxy-2,3,4,5-tetrahydrodipicolinate + NADPH + H(+). Its pathway is amino-acid biosynthesis; L-lysine biosynthesis via DAP pathway; (S)-tetrahydrodipicolinate from L-aspartate: step 4/4. In terms of biological role, catalyzes the conversion of 4-hydroxy-tetrahydrodipicolinate (HTPA) to tetrahydrodipicolinate. The sequence is that of 4-hydroxy-tetrahydrodipicolinate reductase from Pasteurella multocida (strain Pm70).